The chain runs to 383 residues: Mating-type protein MAT-1 (383 aa).

Residues 60–117 (KARKALNAFVGFRCYYVTIPMFKSWPMKKLSNLIGLLWEADPNKSLWSLMAKAWSTIR) constitute a DNA-binding region (alpha box).

It belongs to the MATALPHA1 family.

Its subcellular location is the nucleus. Mating type proteins are sequence specific DNA-binding proteins that act as master switches in fungal differentiation by controlling gene expression in a cell type-specific fashion. Transcriptional activator that induces the transcription of alpha-specific genes. The polypeptide is Mating-type protein MAT-1 (MAT1) (Cochliobolus heterostrophus (Southern corn leaf blight fungus)).